The chain runs to 121 residues: Large ribosomal subunit protein uL14c (121 aa).

This sequence belongs to the universal ribosomal protein uL14 family. In terms of assembly, part of the 50S ribosomal subunit.

It localises to the plastid. The protein resides in the chloroplast. Functionally, binds to 23S rRNA. This is Large ribosomal subunit protein uL14c from Phaeodactylum tricornutum (strain CCAP 1055/1).